Reading from the N-terminus, the 217-residue chain is UPF0323 lipoprotein HPSH_01205 (217 aa).

Positions 1–27 (MKKPYRKISDYAIVGGLSALVMVSIVG) are cleaved as a signal peptide. Cys-28 is lipidated: N-palmitoyl cysteine. Cys-28 carries S-diacylglycerol cysteine lipidation. Residues 160-171 (QRTYKSPQAYQR) show a composition bias toward polar residues. The disordered stretch occupies residues 160–217 (QRTYKSPQAYQRSQNSFSKSAPSASSMGGASKGQSGFFGSSRPTSSPAVSSGTRGFNS). Low complexity predominate over residues 172 to 210 (SQNSFSKSAPSASSMGGASKGQSGFFGSSRPTSSPAVSS).

It belongs to the UPF0323 family.

The protein localises to the cell membrane. The sequence is that of UPF0323 lipoprotein HPSH_01205 from Helicobacter pylori (strain Shi470).